We begin with the raw amino-acid sequence, 351 residues long: DNA-directed RNA polymerase subunit alpha (351 aa).

The alpha N-terminal domain (alpha-NTD) stretch occupies residues 1 to 245 (MPRRNLLKGF…EHFTVFVNFD (245 aa)). Residues 261 to 351 (AVLELLNTKI…MRQKEEIDEA (91 aa)) form an alpha C-terminal domain (alpha-CTD) region.

The protein belongs to the RNA polymerase alpha chain family. Homodimer. The RNAP catalytic core consists of 2 alpha, 1 beta, 1 beta' and 1 omega subunit. When a sigma factor is associated with the core the holoenzyme is formed, which can initiate transcription.

It catalyses the reaction RNA(n) + a ribonucleoside 5'-triphosphate = RNA(n+1) + diphosphate. Its function is as follows. DNA-dependent RNA polymerase catalyzes the transcription of DNA into RNA using the four ribonucleoside triphosphates as substrates. This Treponema pallidum (strain Nichols) protein is DNA-directed RNA polymerase subunit alpha.